The primary structure comprises 224 residues: Viral late gene transcription factor 3 (224 aa).

It belongs to the orthopoxvirus VLTF-3/OPG127 family. As to quaternary structure, interacts with the late transcription elongation factor VLTF-4/OPG110. Interacts with the late transcription factors VLTF-1/OPG093.

Functionally, acts with RNA polymerase to initiate transcription from late gene promoters. This chain is Viral late gene transcription factor 3 (OPG127), found in Monkeypox virus.